Reading from the N-terminus, the 205-residue chain is H/ACA ribonucleoprotein complex subunit GAR1 (205 aa).

Over residues 1–23 (MSFRGGNRGGRGGFRGGFRGGRT) the composition is skewed to gly residues. Residues 1–31 (MSFRGGNRGGRGGFRGGFRGGRTGSARSFQQ) are disordered. An Asymmetric dimethylarginine; by HMT1 modification is found at Arg-4. Residues 4-21 (RGGNRGGRGGFRGGFRGG) form an RGG-box 1 region. Arg-8 is modified (asymmetric dimethylarginine; by HMT1; alternate). Arg-8 is modified (omega-N-methylarginine; by HMT1; alternate). Arg-11 carries the post-translational modification Asymmetric dimethylarginine; by HMT1. Arg-15 is subject to Asymmetric dimethylarginine; by HMT1; alternate. Position 15 is an omega-N-methylarginine; by HMT1; alternate (Arg-15). Position 19 is an asymmetric dimethylarginine; by HMT1 (Arg-19). A Glycyl lysine isopeptide (Lys-Gly) (interchain with G-Cter in ubiquitin) cross-link involves residue Lys-77. The tract at residues 124–205 (PKPKVVGPPK…SRGGFRGGRR (82 aa)) is disordered. Over residues 143–205 (APGGRGGASM…SRGGFRGGRR (63 aa)) the composition is skewed to gly residues. Asymmetric dimethylarginine; by HMT1; alternate is present on residues Arg-147, Arg-154, and Arg-158. An omega-N-methylarginine; by HMT1; alternate mark is found at Arg-147, Arg-154, and Arg-158. Residues 147–205 (RGGASMGRGGSRGGFRGGRGGSSFRGGRGGSSFRGGSRGGSFRGGSRGGSRGGFRGGRR) form an RGG-box 2 region. Arg-162 is modified (asymmetric dimethylarginine; by HMT1). At Arg-165 the chain carries Asymmetric dimethylarginine; by HMT1; alternate. Position 165 is an omega-N-methylarginine; by HMT1; alternate (Arg-165). 2 positions are modified to asymmetric dimethylarginine; by HMT1: Arg-171 and Arg-174. Omega-N-methylarginine; by HMT1 is present on residues Arg-180 and Arg-184. An Asymmetric dimethylarginine; by HMT1; alternate modification is found at Arg-189. Position 189 is an omega-N-methylarginine; by HMT1; alternate (Arg-189). Residues Arg-193, Arg-197, and Arg-201 each carry the asymmetric dimethylarginine; by HMT1 modification.

It belongs to the GAR1 family. Component of the small nucleolar ribonucleoprotein particles containing H/ACA-type snoRNAs (H/ACA snoRNPs). The protein component of the H/ACA snoRNP contains CBF5, GAR1, NHP2 and NOP10. The complex contains a stable core composed of CBF5 and NOP10, to which GAR1 and NHP2 subsequently bind. Interacts with snoRNAs. Methylated by HMT1, forming asymmetric dimethylarginines (DMA) within a domain referred to as an RGG box, made up of repeated Gly-Gly dipeptides interspersed with Arg and aromatic residues.

Its subcellular location is the nucleus. It is found in the nucleolus. Non-catalytic component of the H/ACA small nucleolar ribonucleoprotein (H/ACA snoRNP), which catalyzes pseudouridylation of rRNA and is required for ribosome biogenesis. This involves the isomerization of uridine such that the ribose is subsequently attached to C5, instead of the normal N1. Pseudouridine ('psi') residues may serve to stabilize the conformation of rRNAs. The H/ACA snoRNP complex also mediates pseudouridylation of other types of RNAs. The H/ACA snoRNP complex mediates pseudouridylation at position 93 in U2 snRNA. Essential for growth. The chain is H/ACA ribonucleoprotein complex subunit GAR1 from Saccharomyces cerevisiae (strain ATCC 204508 / S288c) (Baker's yeast).